We begin with the raw amino-acid sequence, 388 residues long: Protein phosphatase 2C 57 (388 aa).

Residues 59 to 348 (RWGYTSVQGF…DNISIIIADL (290 aa)) form the PPM-type phosphatase domain. Residues D93, G94, D296, and D339 each contribute to the Mn(2+) site. The helical transmembrane segment at 363-383 (VVVELVQAATTIGLVTVGIWM) threads the bilayer.

It belongs to the PP2C family. It depends on Mg(2+) as a cofactor. Requires Mn(2+) as cofactor.

The protein localises to the membrane. Its subcellular location is the plastid. It is found in the chloroplast stroma. The enzyme catalyses O-phospho-L-seryl-[protein] + H2O = L-seryl-[protein] + phosphate. It catalyses the reaction O-phospho-L-threonyl-[protein] + H2O = L-threonyl-[protein] + phosphate. Protein phosphatase specifically required for efficient dephosphorylation of the light-harvesting complex II outer antennae (LCHII) and transition from state 2 to state 1. State transition plays a central role in response to environmental changes and allows to adjust to changing light conditions via the redistribution of light excitation energy between photosystem II (PSII) and photosystem I (PSI) in a short time by relocating LHCII proteins. Mainly responsible for the dephosphorylation of Lhcb1 and Lhcb2 but not of the photosystem II core proteins. This chain is Protein phosphatase 2C 57, found in Arabidopsis thaliana (Mouse-ear cress).